The primary structure comprises 516 residues: MQFALALDTNSGPHQIRSCEGDGIDRLEKLSIGGRKQEKALRNRCFGGRVAATTQCILTSDACPETLHSQTQSSRKNYADANRVSAIILGGGTGSQLFPLTSTRATPAVPVGGCYRLIDIPMSNCFNSGINKIFVMSQFNSTSLNRHIHRTYLEGGINFADGSVQVLAATQMPEEPAGWFQGTADSIRKFIWVLEDYYSHKSIDNIVILSGDQLYRMNYMELVQKHVEDDADITISCAPVDESRASKNGLVKIDHTGRVLQFFEKPKGADLNSMRVETNFLSYAIDDAQKYPYLASMGIYVFKKDALLDLLKSKYTQLHDFGSEILPRAVLDHSVQACIFTGYWEDVGTIKSFFDANLALTEQPSKFDFYDPKTPFFTAPRCLPPTQLDKCKMKYAFISDGCLLRECNIEHSVIGVCSRVSSGCELKDSVMMGADTYETEEEASKLLLAGKVPVGIGRNTKIRNCIIDMNARIGKNVVITNSKGIQEADHPEEGYYIRSGIVVILKNATINDGSVI.

Residues 1–45 constitute a chloroplast transit peptide; sequence MQFALALDTNSGPHQIRSCEGDGIDRLEKLSIGGRKQEKALRNRC.

Belongs to the bacterial/plant glucose-1-phosphate adenylyltransferase family. In terms of assembly, heterotetramer. As to expression, endosperm.

Its subcellular location is the plastid. The protein resides in the chloroplast. It localises to the amyloplast. The enzyme catalyses alpha-D-glucose 1-phosphate + ATP + H(+) = ADP-alpha-D-glucose + diphosphate. It participates in glycan biosynthesis; starch biosynthesis. Activated by 3'phosphoglycerate, inhibited by orthophosphate. Allosteric regulation. Functionally, this protein plays a role in synthesis of starch. It catalyzes the synthesis of the activated glycosyl donor, ADP-glucose from Glc-1-P and ATP. This is Glucose-1-phosphate adenylyltransferase large subunit 1, chloroplastic/amyloplastic (SH2) from Zea mays (Maize).